The sequence spans 53 residues: Bowman-Birk type proteinase inhibitor 1 (53 aa).

Intrachain disulfides connect C9/C24, C12/C51, C14/C22, C31/C38, and C40/C48.

As to quaternary structure, dimer.

In terms of biological role, inhibits trypsin (IC(50)=6.20 nM), neutrophil elastase (ELANE) and, to a lesser extent, alpha-chymotrypsin (IC(50)=3.44 uM). This is Bowman-Birk type proteinase inhibitor 1 from Lathyrus sativus (White vetchling).